Reading from the N-terminus, the 493-residue chain is Acetylcholine receptor subunit beta (493 aa).

The first 24 residues, 1 to 24, serve as a signal peptide directing secretion; sequence MENVRRMALGLVVMMALALSGVGA. Over 25–240 the chain is Extracellular; that stretch reads SVMEDTLLSV…VTFYLIIQRK (216 aa). Cys152 and Cys166 are disulfide-bonded. Asn165 is a glycosylation site (N-linked (GlcNAc...) asparagine). 3 consecutive transmembrane segments (helical) span residues 241-265, 273-291, and 307-328; these read PLFY…VFYL, MSLS…LLLA, and YLMF…VLNL. The Cytoplasmic portion of the chain corresponds to 329 to 461; it reads HHRSPNTHTM…WQYVAMVADR (133 aa). The residue at position 379 (Tyr379) is a Phosphotyrosine; by Tyr-kinases. Residues 462–480 form a helical membrane-spanning segment; the sequence is LFLYVFFVICSIGTFSIFL.

Belongs to the ligand-gated ion channel (TC 1.A.9) family. Acetylcholine receptor (TC 1.A.9.1) subfamily. Beta-1/CHRNB1 sub-subfamily. As to quaternary structure, pentamer of two alpha chains, and one each of the beta, delta, and gamma chains.

It is found in the postsynaptic cell membrane. The protein resides in the cell membrane. The catalysed reaction is K(+)(in) = K(+)(out). It catalyses the reaction Na(+)(in) = Na(+)(out). After binding acetylcholine, the AChR responds by an extensive change in conformation that affects all subunits and leads to opening of an ion-conducting channel across the plasma membrane. The chain is Acetylcholine receptor subunit beta (CHRNB1) from Tetronarce californica (Pacific electric ray).